Reading from the N-terminus, the 367-residue chain is Membrane-bound lytic murein transglycosylase C (367 aa).

The signal sequence occupies residues 1–19 (MRKYAKYLPFCLVVPFLAA). Cysteine 20 is lipidated: N-palmitoyl cysteine. Cysteine 20 carries S-diacylglycerol cysteine lipidation.

Belongs to the transglycosylase Slt family.

Its subcellular location is the cell outer membrane. It catalyses the reaction Exolytic cleavage of the (1-&gt;4)-beta-glycosidic linkage between N-acetylmuramic acid (MurNAc) and N-acetylglucosamine (GlcNAc) residues in peptidoglycan, from either the reducing or the non-reducing ends of the peptidoglycan chains, with concomitant formation of a 1,6-anhydrobond in the MurNAc residue.. Murein-degrading enzyme. May play a role in recycling of muropeptides during cell elongation and/or cell division. This Haemophilus ducreyi (strain 35000HP / ATCC 700724) protein is Membrane-bound lytic murein transglycosylase C.